Here is a 494-residue protein sequence, read N- to C-terminus: Trigger factor (494 aa).

The PPIase FKBP-type domain maps to 169–254 (GDRITMDYVG…VKDVAAPGAV (86 aa)). The disordered stretch occupies residues 440–494 (LLAEDEGEAKAETKKAAPKKKAAAKSEAAEAGEGEEAAPKKKAAPKKKASEDSAE).

The protein belongs to the FKBP-type PPIase family. Tig subfamily.

It localises to the cytoplasm. It carries out the reaction [protein]-peptidylproline (omega=180) = [protein]-peptidylproline (omega=0). Involved in protein export. Acts as a chaperone by maintaining the newly synthesized protein in an open conformation. Functions as a peptidyl-prolyl cis-trans isomerase. The chain is Trigger factor from Rhizobium etli (strain ATCC 51251 / DSM 11541 / JCM 21823 / NBRC 15573 / CFN 42).